Consider the following 322-residue polypeptide: NAD(P)H-dependent D-xylose reductase (322 aa).

Residue Tyr52 is the Proton donor of the active site. His114 provides a ligand contact to substrate. NAD(+) is bound by residues 169–170, 218–227, and 274–284; these read SN, SSFGPQSFVE, and KSNLPERLVQN.

Belongs to the aldo/keto reductase family. As to quaternary structure, homodimer.

It catalyses the reaction xylitol + NAD(+) = D-xylose + NADH + H(+). The enzyme catalyses xylitol + NADP(+) = D-xylose + NADPH + H(+). The protein operates within carbohydrate metabolism; D-xylose degradation. Functionally, reduces D-xylose into xylitol. Has a preference for NADPH, but can also utilize NADH as cosubstrate. The chain is NAD(P)H-dependent D-xylose reductase (XYL1) from Candida tenuis (Yeast).